Here is a 314-residue protein sequence, read N- to C-terminus: R2-like ligand binding oxidase (314 aa).

Mn(2+) is bound by residues E68, E101, and H104. Residues 71–162 constitute a cross-link (3-(O4'-tyrosyl)-valine (Val-Tyr)); that stretch reads VTEDIQPFMS…AAQVRASVTY (92 aa). Residue E101 participates in Fe cation binding. Fe cation is bound by residues E167, E202, and H205.

Belongs to the ribonucleoside diphosphate reductase small chain family. R2-like ligand binding oxidase subfamily. As to quaternary structure, homodimer. The cofactor is Fe cation. Mn(2+) serves as cofactor.

Its function is as follows. Probable oxidase that might be involved in lipid metabolism. The sequence is that of R2-like ligand binding oxidase from Mycobacterium tuberculosis (strain ATCC 25177 / H37Ra).